A 278-amino-acid polypeptide reads, in one-letter code: 4-deoxy-L-threo-5-hexosulose-uronate ketol-isomerase (278 aa).

Positions 196, 198, 203, and 245 each coordinate Zn(2+).

The protein belongs to the KduI family. As to quaternary structure, homohexamer. Zn(2+) is required as a cofactor.

It catalyses the reaction 5-dehydro-4-deoxy-D-glucuronate = 3-deoxy-D-glycero-2,5-hexodiulosonate. The protein operates within glycan metabolism; pectin degradation; 2-dehydro-3-deoxy-D-gluconate from pectin: step 4/5. Catalyzes the isomerization of 5-dehydro-4-deoxy-D-glucuronate to 3-deoxy-D-glycero-2,5-hexodiulosonate. This Escherichia coli O8 (strain IAI1) protein is 4-deoxy-L-threo-5-hexosulose-uronate ketol-isomerase.